The primary structure comprises 270 residues: BPI fold-containing family A member 1 (270 aa).

An N-terminal signal peptide occupies residues 1-19 (MFLVGSLVVLCGLLAQSTA). Residues 104–109 (LVGGLL) form an important for surfactant activity and antibacterial properties region. Asparagine 174 is a glycosylation site (N-linked (GlcNAc...) asparagine). A disulfide bridge links cysteine 196 with cysteine 238.

The protein belongs to the BPI/LBP/Plunc superfamily. Plunc family. In terms of assembly, monomer. Interacts (via N-terminus) with SCNN1B, a subunit of the heterotrimeric epithelial sodium channel (ENaC); this inhibits proteolytic activation of ENaC. As to expression, detected in adult nasal epithelium, heart, lung, spleen, testis and salivary gland, and in embryonic nasal epithelium, lung, salivary gland and thymus.

Its subcellular location is the secreted. In terms of biological role, lipid-binding protein which shows high specificity for the surfactant phospholipid dipalmitoylphosphatidylcholine (DPPC). Plays a role in the innate immune responses of the upper airways. Reduces the surface tension in secretions from airway epithelia and inhibits the formation of biofilm by pathogenic Gram-negative bacteria, such as P.aeruginosa and K.pneumoniae. Negatively regulates proteolytic cleavage of SCNN1G, an event that is required for activation of the epithelial sodium channel (ENaC), and thereby contributes to airway surface liquid homeostasis and proper clearance of mucus. Plays a role in the airway inflammatory response after exposure to irritants. May attract macrophages and neutrophils. The chain is BPI fold-containing family A member 1 (Bpifa1) from Rattus norvegicus (Rat).